The primary structure comprises 1369 residues: Phospholipase D1 (1369 aa).

Disordered regions lie at residues 27 to 90 and 318 to 340; these read YSEK…SSWH and ESHS…GRKK. Residues 31–53 show a composition bias toward basic and acidic residues; that stretch reads GTGRKDAEDHTPSKITDLEKNVD. Residues 208–379 form the PX domain; sequence TDLIKVSVLD…NVLYSFLEFS (172 aa). 2 consecutive PLD phosphodiesterase domains span residues 641–668 and 941–968; these read LFWA…CFGR and EMIY…NERS. Positions 1277-1289 are enriched in basic and acidic residues; that stretch reads HETHEKSENDPKN. Residues 1277–1320 are disordered; the sequence is HETHEKSENDPKNPKAGSQGSGNTSASEDSKTEKPKTRTNNGLQ. Positions 1292–1303 are enriched in polar residues; sequence AGSQGSGNTSAS.

This sequence belongs to the phospholipase D family.

It localises to the cytoplasm. It catalyses the reaction a 1,2-diacyl-sn-glycero-3-phosphocholine + H2O = a 1,2-diacyl-sn-glycero-3-phosphate + choline + H(+). Activity is slightly stimulated by oleate. In terms of biological role, required for meiosis and spore formation. Seems to be involved in the coordinate induction of late meiotic events. The sequence is that of Phospholipase D1 (pld1) from Schizosaccharomyces pombe (strain 972 / ATCC 24843) (Fission yeast).